The sequence spans 177 residues: dCTP deaminase (177 aa).

DCTP-binding positions include 100-105 and aspartate 116; that span reads RSSIAR. The active-site Proton donor/acceptor is glutamate 126. DCTP is bound by residues tyrosine 159 and glutamine 166.

Belongs to the dCTP deaminase family. Homotrimer.

It catalyses the reaction dCTP + H2O + H(+) = dUTP + NH4(+). It functions in the pathway pyrimidine metabolism; dUMP biosynthesis; dUMP from dCTP (dUTP route): step 1/2. Functionally, catalyzes the deamination of dCTP to dUTP. This Korarchaeum cryptofilum (strain OPF8) protein is dCTP deaminase.